The primary structure comprises 100 residues: Large ribosomal subunit protein bL21 (100 aa).

Belongs to the bacterial ribosomal protein bL21 family. In terms of assembly, part of the 50S ribosomal subunit. Contacts protein L20.

In terms of biological role, this protein binds to 23S rRNA in the presence of protein L20. The protein is Large ribosomal subunit protein bL21 of Mycoplasma pneumoniae (strain ATCC 29342 / M129 / Subtype 1) (Mycoplasmoides pneumoniae).